The primary structure comprises 279 residues: Coiled-coil domain-containing protein 106 (279 aa).

A coiled-coil region spans residues 62 to 101 (KAQLHMALERNSWLQKRIEDLEEERDFLRCQLDKFISSAR). The segment covering 109 to 121 (RMKPGPRRVDGDS) has biased composition (basic and acidic residues). The tract at residues 109-173 (RMKPGPRRVD…FGKTKARERQ (65 aa)) is disordered. A Phosphoserine modification is found at Ser129. The short motif at 151 to 164 (KRQKQKGSTSRKRF) is the Bipartite nuclear localization signal element. A compositionally biased stretch (basic residues) spans 151–167 (KRQKQKGSTSRKRFGKT).

As to quaternary structure, interacts with p53/TP53.

The protein localises to the nucleus. Functionally, promotes the degradation of p53/TP53 protein and inhibits its transactivity. The chain is Coiled-coil domain-containing protein 106 (Ccdc106) from Mus musculus (Mouse).